The primary structure comprises 374 residues: Transcription factor IIIA (374 aa).

C2H2-type zinc fingers lie at residues 23–47, 53–77, 83–107, 113–138, 144–169, 204–226, and 236–261; these read FHCPYEECGKKYSRPSLLEQHLRTH, FVCDYTGCSKAFYRKSHLKIHKRCH, FSCHYDGCDAQFYTQQHLERHIEVH, YACTWEGCDECFSKHQQLRSHISACH, YPCTYQDCELRFATKQKLQNHVNRAH, PSCSICGRQFKTAAHLRHHVVLH, and YHCPMEGCKKSFTRSSALKKHISVIH. The C2H2-type 8; atypical zinc-finger motif lies at 267-291; it reads FHCDSCGTKFGYKHMLQRHLERGTC. The C2H2-type 9 zinc-finger motif lies at 349 to 374; it reads YSCSFPECNYRFKRLYDMHRHLNSHH.

The protein localises to the nucleus. In terms of biological role, is required for correct transcription of 5S RNA genes by RNA polymerase III. Also binds the transcribed 5S RNA's. Initiates transcription of the 5S ribosomal RNA gene. The chain is Transcription factor IIIA (sfc2) from Schizosaccharomyces pombe (strain 972 / ATCC 24843) (Fission yeast).